Reading from the N-terminus, the 872-residue chain is Probably inactive leucine-rich repeat receptor-like protein kinase At5g06940 (872 aa).

An N-terminal signal peptide occupies residues 1 to 26 (MATRFKHQFSISLALTFFFFFTKTFS). Residues 27 to 540 (FTENEELGNL…RSNFHKKGGK (514 aa)) lie on the Extracellular side of the membrane. 3 N-linked (GlcNAc...) asparagine glycosylation sites follow: asparagine 55, asparagine 63, and asparagine 86. 18 LRR repeats span residues 79–98 (SINLQSLNLSGEISDSICDL), 99–122 (PYLTHLDLSLNFFNQPIPLQLSRC), 123–146 (VTLETLNLSSNLIWGTIPDQISEF), 147–169 (SSLKVIDFSSNHVEGMIPEDLGL), 171–193 (FNLQVLNLGSNLLTGIVPPAIGK), 195–217 (SELVVLDLSENSYLVSEIPSFLG), 219–243 (LDKLEQLLLHRSGFHGEIPTSFVGL), 244–267 (TSLRTLDLSLNNLSGEIPRSLGPS), 269–292 (KNLVSLDVSQNKLSGSFPSGICSG), 294–316 (RLINLSLHSNFFEGSLPNSIGEC), 317–340 (LSLERLQVQNNGFSGEFPVVLWKL), 341–365 (PRIKIIRADNNRFTGQVPESVSLAS), 367–389 (LEQVEIVNNSFSGEIPHGLGLVK), 391–412 (LYKFSASQNRFSGELPPNFCDS), 413–435 (PVLSIVNISHNRLLGKIPELKNC), 436–459 (KKLVSLSLAGNAFTGEIPPSLADL), 460–482 (HVLTYLDLSDNSLTGLIPQGLQN), and 484–506 (KLALFNVSFNGLSGEVPHSLVSG). N-linked (GlcNAc...) asparagine glycosylation is present at asparagine 129. Asparagine 255 carries N-linked (GlcNAc...) asparagine glycosylation. The N-linked (GlcNAc...) asparagine glycan is linked to asparagine 297. Asparagine 374 carries an N-linked (GlcNAc...) asparagine glycan. Asparagine 419 carries N-linked (GlcNAc...) asparagine glycosylation. N-linked (GlcNAc...) asparagine glycosylation is present at asparagine 489. The helical transmembrane segment at 541-561 (ALVLSLICLALAIATFLAVLY) threads the bilayer. Over 562–872 (RYSRKKVQFK…ISSSVSPVSA (311 aa)) the chain is Cytoplasmic. Threonine 585 carries the phosphothreonine modification. The region spanning 589 to 863 (LMKVVNESCP…VKVIKLLEGI (275 aa)) is the Protein kinase domain. ATP-binding positions include 595-603 (ESCPSGSEV) and lysine 617. 4 positions are modified to phosphotyrosine: tyrosine 662, tyrosine 699, tyrosine 754, and tyrosine 761.

Belongs to the protein kinase superfamily. Ser/Thr protein kinase family.

It localises to the membrane. This chain is Probably inactive leucine-rich repeat receptor-like protein kinase At5g06940, found in Arabidopsis thaliana (Mouse-ear cress).